Here is a 595-residue protein sequence, read N- to C-terminus: MDSAAGGGGLTAIRLPYRHLRDAEMELVSLNGGTPRGGSPKDPDATHQQGPPAARTTTTRKLVLACMVAAGVQFGWALQLSLLTPYIQTLGIDHAMASFIWLCGPITGFVVQPCVGVWSDKCRSKYGRRRPFILAGCLMICFAVTLIGFSADLGYILGDTTEHCSTYKGSRFRAAIIFVLGFWMLDLANNTVQGPARALLADLSGPDQCNSANAIFCTWMAVGNVLGFSSGASGNWHKWFPFLMTRACCEACSNLKAAFLVAVVFLLFCMSVTLYFAEEIPLEPTDAQRLSDSAPLLNGSRDDNNASNEPRNGALPNGHTDGSNVPANSNAEDSNSNRENVEVFNDGPGAVLVNILTSMRHLPPGMYSVLLVMALTWLSWFPFFLFDTDWMGREVYHGDPNGNLSERKAYDNGVREGAFGLLLNSVVLGIGSFLVDPLCRLMGARLVWAISNFTVFICMLATAILSWISFDLYSSKLHHIIGANKTVKNSALIVFSLLGLPLSITYSVPFSVTAELTAGTGGGQGLATGVLNLAIVVPQIVVSLGAGPWDALFGGGNVPAFALASVFSLGAGVLAVLKLPKLPNSYRSAGFHGFG.

Residues 1-61 (MDSAAGGGGL…PAARTTTTRK (61 aa)) are Cytoplasmic-facing. Residues 29–55 (SLNGGTPRGGSPKDPDATHQQGPPAAR) form a disordered region. A helical membrane pass occupies residues 62 to 82 (LVLACMVAAGVQFGWALQLSL). Over 83–97 (LTPYIQTLGIDHAMA) the chain is Extracellular. A helical membrane pass occupies residues 98–118 (SFIWLCGPITGFVVQPCVGVW). Residues 119 to 130 (SDKCRSKYGRRR) lie on the Cytoplasmic side of the membrane. A helical membrane pass occupies residues 131-151 (PFILAGCLMICFAVTLIGFSA). Over 152 to 173 (DLGYILGDTTEHCSTYKGSRFR) the chain is Extracellular. The chain crosses the membrane as a helical span at residues 174–194 (AAIIFVLGFWMLDLANNTVQG). Over 195–213 (PARALLADLSGPDQCNSAN) the chain is Cytoplasmic. Residues 214–234 (AIFCTWMAVGNVLGFSSGASG) form a helical membrane-spanning segment. Residues 235 to 256 (NWHKWFPFLMTRACCEACSNLK) lie on the Extracellular side of the membrane. A helical transmembrane segment spans residues 257–277 (AAFLVAVVFLLFCMSVTLYFA). The Cytoplasmic segment spans residues 278 to 365 (EEIPLEPTDA…LTSMRHLPPG (88 aa)). The disordered stretch occupies residues 291–340 (SDSAPLLNGSRDDNNASNEPRNGALPNGHTDGSNVPANSNAEDSNSNREN). Residues 320–334 (TDGSNVPANSNAEDS) show a composition bias toward polar residues. The helical transmembrane segment at 366-386 (MYSVLLVMALTWLSWFPFFLF) threads the bilayer. At 387 to 417 (DTDWMGREVYHGDPNGNLSERKAYDNGVREG) the chain is on the extracellular side. N403 is a glycosylation site (N-linked (GlcNAc...) asparagine). The helical transmembrane segment at 418–438 (AFGLLLNSVVLGIGSFLVDPL) threads the bilayer. Over 439–447 (CRLMGARLV) the chain is Cytoplasmic. Residues 448–468 (WAISNFTVFICMLATAILSWI) form a helical membrane-spanning segment. The Extracellular segment spans residues 469-491 (SFDLYSSKLHHIIGANKTVKNSA). N484 carries N-linked (GlcNAc...) asparagine glycosylation. The helical transmembrane segment at 492–512 (LIVFSLLGLPLSITYSVPFSV) threads the bilayer. Residues 513 to 525 (TAELTAGTGGGQG) lie on the Cytoplasmic side of the membrane. Residues 526–546 (LATGVLNLAIVVPQIVVSLGA) form a helical membrane-spanning segment. The Extracellular portion of the chain corresponds to 547 to 556 (GPWDALFGGG). The helical transmembrane segment at 557–577 (NVPAFALASVFSLGAGVLAVL) threads the bilayer. At 578–595 (KLPKLPNSYRSAGFHGFG) the chain is on the cytoplasmic side.

The protein belongs to the glycoside-pentoside-hexuronide (GPH) cation symporter transporter (TC 2.A.2.4) family. Homodimer.

It is found in the cell membrane. Its pathway is glycan biosynthesis; sucrose metabolism. Its function is as follows. Responsible for the transport of sucrose into the cell, with the concomitant uptake of protons (symport system). May also transport other glucosides. In Oryza sativa subsp. indica (Rice), this protein is Sucrose transport protein SUT4 (SUT4).